The primary structure comprises 941 residues: UvrABC system protein A (941 aa).

37 to 44 (GLSGSGKS) is an ATP binding site. The C4-type zinc finger occupies 260 to 287 (CFKCKMSFEELEPLSFSFNSPKGACESC). ABC transporter domains are found at residues 316-585 (IFGY…NNHS) and 605-937 (KEKH…KFLA). 637–644 (GVSGSGKS) is a binding site for ATP. The C4-type zinc finger occupies 737-763 (CEKCQGDGDIKIEMHFLPDVLVQCDSC).

The protein belongs to the ABC transporter superfamily. UvrA family. Forms a heterotetramer with UvrB during the search for lesions.

It localises to the cytoplasm. Functionally, the UvrABC repair system catalyzes the recognition and processing of DNA lesions. UvrA is an ATPase and a DNA-binding protein. A damage recognition complex composed of 2 UvrA and 2 UvrB subunits scans DNA for abnormalities. When the presence of a lesion has been verified by UvrB, the UvrA molecules dissociate. This chain is UvrABC system protein A, found in Helicobacter pylori (strain J99 / ATCC 700824) (Campylobacter pylori J99).